The primary structure comprises 311 residues: Protein N-terminal asparagine amidohydrolase (311 aa).

Monomer.

Its subcellular location is the cytoplasm. The catalysed reaction is N-terminal L-asparaginyl-[protein] + H2O + H(+) = N-terminal L-aspartyl-[protein] + NH4(+). N-terminal asparagine deamidase that mediates deamidation of N-terminal asparagine residues to aspartate. Required for the ubiquitin-dependent turnover of intracellular proteins that initiate with Met-Asn. These proteins are acetylated on the retained initiator methionine and can subsequently be modified by the removal of N-acetyl methionine by acylaminoacid hydrolase (AAH). Conversion of the resulting N-terminal asparagine to aspartate by NTAN1/PNAD renders the protein susceptible to arginylation, polyubiquitination and degradation as specified by the N-end rule. This enzyme does not act on substrates with internal or C-terminal asparagines and does not act on glutamine residues in any position. This Sus scrofa (Pig) protein is Protein N-terminal asparagine amidohydrolase (NTAN1).